Here is a 368-residue protein sequence, read N- to C-terminus: Agmatine deiminase (368 aa).

Catalysis depends on Cys-357, which acts as the Amidino-cysteine intermediate.

This sequence belongs to the agmatine deiminase family. In terms of assembly, homodimer.

The enzyme catalyses agmatine + H2O = N-carbamoylputrescine + NH4(+). It functions in the pathway amine and polyamine biosynthesis; putrescine biosynthesis via agmatine pathway; N-carbamoylputrescine from agmatine: step 1/1. Mediates the hydrolysis of agmatine into N-carbamoylputrescine in the arginine decarboxylase (ADC) pathway of putrescine biosynthesis, a basic polyamine. The polypeptide is Agmatine deiminase (Pseudomonas putida (strain ATCC 700007 / DSM 6899 / JCM 31910 / BCRC 17059 / LMG 24140 / F1)).